A 249-amino-acid polypeptide reads, in one-letter code: DNA repair protein RecO (249 aa).

The protein belongs to the RecO family.

Involved in DNA repair and RecF pathway recombination. The protein is DNA repair protein RecO of Lawsonia intracellularis (strain PHE/MN1-00).